The following is a 268-amino-acid chain: Tryptophan synthase alpha chain (268 aa).

Catalysis depends on proton acceptor residues glutamate 49 and aspartate 60.

It belongs to the TrpA family. In terms of assembly, tetramer of two alpha and two beta chains.

The enzyme catalyses (1S,2R)-1-C-(indol-3-yl)glycerol 3-phosphate + L-serine = D-glyceraldehyde 3-phosphate + L-tryptophan + H2O. Its pathway is amino-acid biosynthesis; L-tryptophan biosynthesis; L-tryptophan from chorismate: step 5/5. Functionally, the alpha subunit is responsible for the aldol cleavage of indoleglycerol phosphate to indole and glyceraldehyde 3-phosphate. The sequence is that of Tryptophan synthase alpha chain from Xanthomonas axonopodis pv. citri (strain 306).